We begin with the raw amino-acid sequence, 439 residues long: Mitochondrial distribution and morphology protein 12 (439 aa).

The region spanning 1-439 is the SMP-LTD domain; the sequence is MSIDINWDTI…VYPSFWTFLV (439 aa). 2 disordered regions span residues 65-165 and 229-284; these read PLPD…PGAL and LTLT…HEKS. Positions 69-90 are enriched in acidic residues; it reads FYEDDEDYPDEEGDEAENEAED. Residues 109–121 show a composition bias toward basic and acidic residues; sequence PSRDSQSRERGRG. Residues 229-243 show a composition bias toward polar residues; the sequence is LTLTPQSHPDPTSRP.

This sequence belongs to the MDM12 family. As to quaternary structure, component of the ER-mitochondria encounter structure (ERMES) or MDM complex, composed of MMM1, MDM10, mdm12 and MDM34. An MMM1 homodimer associates with one molecule of mdm12 on each side in a pairwise head-to-tail manner, and the SMP-LTD domains of MMM1 and mdm12 generate a continuous hydrophobic tunnel for phospholipid trafficking.

It localises to the mitochondrion outer membrane. Its subcellular location is the endoplasmic reticulum membrane. Functionally, component of the ERMES/MDM complex, which serves as a molecular tether to connect the endoplasmic reticulum (ER) and mitochondria. Components of this complex are involved in the control of mitochondrial shape and protein biogenesis, and function in nonvesicular lipid trafficking between the ER and mitochondria. mdm12 is required for the interaction of the ER-resident membrane protein MMM1 and the outer mitochondrial membrane-resident beta-barrel protein MDM10. The mdm12-MMM1 subcomplex functions in the major beta-barrel assembly pathway that is responsible for biogenesis of all mitochondrial outer membrane beta-barrel proteins, and acts in a late step after the SAM complex. The MDM10-mdm12-MMM1 subcomplex further acts in the TOM40-specific pathway after the action of the mdm12-MMM1 complex. Essential for establishing and maintaining the structure of mitochondria and maintenance of mtDNA nucleoids. The protein is Mitochondrial distribution and morphology protein 12 of Pyrenophora tritici-repentis (strain Pt-1C-BFP) (Wheat tan spot fungus).